The primary structure comprises 365 residues: tRNA/tmRNA (uracil-C(5))-methyltransferase (365 aa).

The S-adenosyl-L-methionine site is built by Gln-189, Tyr-217, Asn-222, Glu-238, and Asp-298. Residue Cys-323 is the Nucleophile of the active site. Catalysis depends on Glu-357, which acts as the Proton acceptor.

It belongs to the class I-like SAM-binding methyltransferase superfamily. RNA M5U methyltransferase family. TrmA subfamily.

The enzyme catalyses uridine(54) in tRNA + S-adenosyl-L-methionine = 5-methyluridine(54) in tRNA + S-adenosyl-L-homocysteine + H(+). It catalyses the reaction uridine(341) in tmRNA + S-adenosyl-L-methionine = 5-methyluridine(341) in tmRNA + S-adenosyl-L-homocysteine + H(+). Functionally, dual-specificity methyltransferase that catalyzes the formation of 5-methyluridine at position 54 (m5U54) in all tRNAs, and that of position 341 (m5U341) in tmRNA (transfer-mRNA). This Shewanella baltica (strain OS185) protein is tRNA/tmRNA (uracil-C(5))-methyltransferase.